The chain runs to 391 residues: MMITKQSYQKFALMRVFVFSLSAFIFNTTEFVPVALLSDIAKSFEMESATVGLMITAYAWVVSLGSLPLMLLSAKIERKRLLLFLFALFIASHILSALAWNFWVLLISRIGIAFAHSIFWSITASLVIRVAPRNKKQQALGLLALGSSLAMILGLPLGRIIGQMLDWRSTFGVIGGVATLIALLMWKLLPPLPSRNAGTLASVPILMKRPLLMGIYLLVIMVISGHFTTYSYIEPFIIQISQFSPDITTLMLFVFGLAGVAGSFLFGRLYAKNSRKFIAFAMILVICPQLLLFVFKNLEWVIFLQIFLWGIGITSLTIALQMRVLQLAPDATDVASAIFSGSYNVGIGSGALFGSIVIHQLGLGYIGFVGGALGLLALFWLRFITIKFKKT.

The next 12 membrane-spanning stretches (helical) occupy residues 16-36, 51-71, 82-102, 103-123, 138-158, 171-191, 210-230, 247-267, 277-297, 300-320, 338-358, and 361-381; these read VFVF…PVAL, VGLM…PLML, LLFL…AWNF, WVLL…WSIT, QALG…LPLG, FGVI…LLPP, PLLM…FTTY, ITTL…FLFG, FIAF…VFKN, WVIF…TIAL, IFSG…SIVI, and LGLG…LFWL.

This sequence belongs to the major facilitator superfamily. SotB (TC 2.A.1.2) family.

The protein localises to the cell inner membrane. Functionally, involved in the efflux of sugars. The physiological role may be the reduction of the intracellular concentration of toxic sugars or sugar metabolites. This Helicobacter pylori (strain G27) protein is Probable sugar efflux transporter.